We begin with the raw amino-acid sequence, 523 residues long: Succinate-semialdehyde dehydrogenase, mitochondrial (523 aa).

Residues 1–35 (MATCFLLRSFWAARPALPPPGRFRPEPAGTPRRSY) constitute a mitochondrion transit peptide. Lysine 74 carries the N6-acetyllysine modification. Residue lysine 114 is modified to N6-acetyllysine; alternate. Lysine 114 is subject to N6-succinyllysine; alternate. Lysine 123 bears the N6-succinyllysine mark. Lysine 128 is modified (N6-acetyllysine). An N6-succinyllysine modification is found at lysine 172. NAD(+)-binding positions include arginine 201 and 216–219 (KPAE). Arginine 201 contacts substrate. An N6-acetyllysine; alternate modification is found at lysine 253. Lysine 253 bears the N6-succinyllysine; alternate mark. 272–277 (GSTATG) provides a ligand contact to NAD(+). Residue glutamate 294 is the Proton acceptor of the active site. Arginine 322 is a substrate binding site. The active-site Nucleophile is cysteine 328. Cysteine 328 and cysteine 330 are oxidised to a cystine. Lysine 347 is modified (N6-acetyllysine; alternate). Residue lysine 347 is modified to N6-succinyllysine; alternate. At lysine 353 the chain carries N6-acetyllysine. The residue at position 390 (lysine 390) is an N6-succinyllysine. Residue lysine 399 is modified to N6-acetyllysine. Serine 403 bears the Phosphoserine mark. Residue serine 486 participates in substrate binding. Serine 487 carries the post-translational modification Phosphoserine.

It belongs to the aldehyde dehydrogenase family. Homotetramer.

It is found in the mitochondrion. It carries out the reaction succinate semialdehyde + NAD(+) + H2O = succinate + NADH + 2 H(+). The protein operates within amino-acid degradation; 4-aminobutanoate degradation. Its activity is regulated as follows. Redox-regulated. Inhibited under oxydizing conditions. In terms of biological role, catalyzes one step in the degradation of the inhibitory neurotransmitter gamma-aminobutyric acid (GABA). The protein is Succinate-semialdehyde dehydrogenase, mitochondrial (Aldh5a1) of Mus musculus (Mouse).